A 350-amino-acid chain; its full sequence is Glutamyl-tRNA reductase (350 aa).

Residues 53-56 (TCNR), serine 105, 110-112 (ETQ), and glutamine 116 contribute to the substrate site. Cysteine 54 functions as the Nucleophile in the catalytic mechanism. Residue 185 to 190 (GAGETA) participates in NADP(+) binding.

The protein belongs to the glutamyl-tRNA reductase family. As to quaternary structure, homodimer.

It catalyses the reaction (S)-4-amino-5-oxopentanoate + tRNA(Glu) + NADP(+) = L-glutamyl-tRNA(Glu) + NADPH + H(+). The protein operates within porphyrin-containing compound metabolism; protoporphyrin-IX biosynthesis; 5-aminolevulinate from L-glutamyl-tRNA(Glu): step 1/2. Its function is as follows. Catalyzes the NADPH-dependent reduction of glutamyl-tRNA(Glu) to glutamate 1-semialdehyde (GSA). The protein is Glutamyl-tRNA reductase of Deinococcus radiodurans (strain ATCC 13939 / DSM 20539 / JCM 16871 / CCUG 27074 / LMG 4051 / NBRC 15346 / NCIMB 9279 / VKM B-1422 / R1).